A 1325-amino-acid chain; its full sequence is ATP-binding cassette sub-family C member 4 (1325 aa).

The region spanning 92-377 (YLVLGIFTLI…FFPSAIERVS (286 aa)) is the ABC transmembrane type-1 1 domain. Helical transmembrane passes span 93–113 (LVLGIFTLIEESAKVIQPIFL), 136–156 (AYATVLTFCTLILAILHHLYF), 207–227 (QVTVFLHFLWAGPLQAIAVTA), 228–248 (LLWMEIGISCLAGMAVLIILL), 328–348 (SKIIVFVTFTTYVLLGSVITA), 351–371 (VFVAVTLYGAVRLTVTLFFPS), and 440–460 (LLAVVGPVGAGKSSLLSAVLG). One can recognise an ABC transporter 1 domain in the interval 410–633 (VHVQDFTAFW…GIDFGSLLKK (224 aa)). Position 445–452 (445–452 (GPVGAGKS)) interacts with ATP. 2 positions are modified to phosphothreonine: threonine 646 and threonine 648. The span at 657 to 667 (SSVWSQQSSRP) shows a compositional bias: low complexity. The tract at residues 657–688 (SSVWSQQSSRPSLKDGALESQDTENVPVTLSE) is disordered. Serine 664 and serine 668 each carry phosphoserine. A helical membrane pass occupies residues 710-730 (HWIVFIFLILLNTAAQVAYVL). The 292-residue stretch at 714-1005 (FIFLILLNTA…CVRQSAEVEN (292 aa)) folds into the ABC transmembrane type-1 2 domain. N-linked (GlcNAc...) asparagine glycosylation is found at asparagine 746 and asparagine 754. The next 6 membrane-spanning stretches (helical) occupy residues 771 to 791 (LTVATVLFGIARSLLVFYVLV), 836 to 856 (LPLTFLDFIQTLLQVVGVVSV), 858 to 878 (VAVIPWIAIPLVPLGIIFIFL), 954 to 974 (AICAMFVIIVAFGSLILAKTL), 977 to 997 (GQVGLALSYALTLMGMFQWCV), and 1038 to 1058 (EGVIIFDNVNFMYSPGGPLVL). The ABC transporter 2 domain maps to 1041–1274 (IIFDNVNFMY…KESLFYKMVQ (234 aa)). 1075-1082 (GRTGAGKS) lines the ATP pocket. Residues 1322 to 1325 (ETAL) carry the PDZ-binding motif.

Belongs to the ABC transporter superfamily. ABCC family. Conjugate transporter (TC 3.A.1.208) subfamily. Interacts (via PDZ-binding motif) with SNX27 (via PDZ domain); this interaction accelerates MRP4 internalization. It depends on Mg(2+) as a cofactor. In terms of processing, N-glycosylated; leading to substrate-selective effects on its transport activity. As to expression, widely expressed, with particularly high levels in prostate, but is barely detectable in liver. sinusoidal membrane of hepatocytes.

It localises to the basolateral cell membrane. The protein localises to the apical cell membrane. The catalysed reaction is ATP + H2O + xenobioticSide 1 = ADP + phosphate + xenobioticSide 2.. The enzyme catalyses an S-substituted glutathione(in) + ATP + H2O = an S-substituted glutathione(out) + ADP + phosphate + H(+). It carries out the reaction 17beta-estradiol 17-O-(beta-D-glucuronate)(in) + ATP + H2O = 17beta-estradiol 17-O-(beta-D-glucuronate)(out) + ADP + phosphate + H(+). It catalyses the reaction dehydroepiandrosterone 3-sulfate(in) + ATP + H2O = dehydroepiandrosterone 3-sulfate(out) + ADP + phosphate + H(+). The catalysed reaction is leukotriene C4(in) + ATP + H2O = leukotriene C4(out) + ADP + phosphate + H(+). The enzyme catalyses leukotriene B4(in) + ATP + H2O = leukotriene B4(out) + ADP + phosphate + H(+). It carries out the reaction urate(in) + ATP + H2O = urate(out) + ADP + phosphate + H(+). It catalyses the reaction 3',5'-cyclic GMP(in) + ATP + H2O = 3',5'-cyclic GMP(out) + ADP + phosphate + H(+). The catalysed reaction is 3',5'-cyclic AMP(in) + ATP + H2O = 3',5'-cyclic AMP(out) + ADP + phosphate + H(+). The enzyme catalyses prostaglandin E2(in) + ATP + H2O = prostaglandin E2(out) + ADP + phosphate + H(+). It carries out the reaction prostaglandin E1(in) + ATP + H2O = prostaglandin E1(out) + ADP + phosphate + H(+). It catalyses the reaction glycodeoxycholate(in) + glutathione(in) + ATP + H2O = glycodeoxycholate(out) + glutathione(out) + ADP + phosphate + H(+). The catalysed reaction is cholate(in) + glutathione(in) + ATP + H2O = cholate(out) + glutathione(out) + ADP + phosphate + H(+). The enzyme catalyses glycocholate(in) + glutathione(in) + ATP + H2O = glycocholate(out) + glutathione(out) + ADP + phosphate + H(+). It carries out the reaction taurocholate(in) + glutathione(in) + ATP + H2O = taurocholate(out) + glutathione(out) + ADP + phosphate + H(+). It catalyses the reaction glycochenodeoxycholate(in) + glutathione(in) + ATP + H2O = glycochenodeoxycholate(out) + glutathione(out) + ADP + phosphate + H(+). The catalysed reaction is taurochenodeoxycholate(in) + glutathione(in) + ATP + H2O = taurochenodeoxycholate(out) + glutathione(out) + ADP + phosphate + H(+). The enzyme catalyses glycoursodeoxycholate(in) + glutathione(in) + ATP + H2O = glycoursodeoxycholate(out) + glutathione(out) + ADP + phosphate + H(+). It carries out the reaction tauroursodeoxycholate(in) + glutathione(in) + ATP + H2O = tauroursodeoxycholate(out) + glutathione(out) + ADP + phosphate + H(+). Its activity is regulated as follows. GSH stimulates the transport of MRP4. Urate inhibits methotrexate transport but stimulates cGMP transport. Nonsteroidal anti-inflammatory drugs (NSAIDs) strongly suppress the transport of MRP4 substrates. In terms of biological role, ATP-dependent transporter of the ATP-binding cassette (ABC) family that actively extrudes physiological compounds and xenobiotics from cells. Transports a range of endogenous molecules that have a key role in cellular communication and signaling, including cyclic nucleotides such as cyclic AMP (cAMP) and cyclic GMP (cGMP), bile acids, steroid conjugates, urate, and prostaglandins. Mediates the ATP-dependent efflux of glutathione conjugates such as leukotriene C4 (LTC4) and leukotriene B4 (LTB4) too. The presence of GSH is necessary for the ATP-dependent transport of LTB4, whereas GSH is not required for the transport of LTC4. Mediates the cotransport of bile acids with reduced glutathione (GSH). Transports a wide range of drugs and their metabolites, including anticancer, antiviral and antibiotics molecules. Confers resistance to anticancer agents such as methotrexate. The chain is ATP-binding cassette sub-family C member 4 (ABCC4) from Homo sapiens (Human).